The sequence spans 317 residues: Large ribosomal subunit protein uL10 (317 aa).

Tyrosine 24 is modified (phosphotyrosine). Threonine 59 is subject to Phosphothreonine. Lysine 264 participates in a covalent cross-link: Glycyl lysine isopeptide (Lys-Gly) (interchain with G-Cter in ubiquitin). The disordered stretch occupies residues 294–317 (APAKVEAKEESEESDEDMGFGLFD). Residue lysine 297 forms a Glycyl lysine isopeptide (Lys-Gly) (interchain with G-Cter in SUMO1); alternate linkage. Residue lysine 297 forms a Glycyl lysine isopeptide (Lys-Gly) (interchain with G-Cter in SUMO2); alternate linkage. Acidic residues predominate over residues 302–311 (EESEESDEDM). Phosphoserine is present on residues serine 304 and serine 307.

The protein belongs to the universal ribosomal protein uL10 family. P0 forms a pentameric complex by interaction with dimers of P1 and P2. Identified in a IGF2BP1-dependent mRNP granule complex containing untranslated mRNAs. Interacts with APEX1. Interacts with FMR1 isoform 6. Ubiquitinated at Lys-264 by RNF14 and RNF25 in response to ribosome collisions (ribosome stalling).

The protein resides in the nucleus. It is found in the cytoplasm. Ribosomal protein P0 is the functional equivalent of E.coli protein L10. In Homo sapiens (Human), this protein is Large ribosomal subunit protein uL10 (RPLP0).